We begin with the raw amino-acid sequence, 123 residues long: Large ribosomal subunit protein uL14 (123 aa).

It belongs to the universal ribosomal protein uL14 family. As to quaternary structure, part of the 50S ribosomal subunit. Forms a cluster with proteins L3 and L19. In the 70S ribosome, L14 and L19 interact and together make contacts with the 16S rRNA in bridges B5 and B8.

Binds to 23S rRNA. Forms part of two intersubunit bridges in the 70S ribosome. This Photobacterium profundum (strain SS9) protein is Large ribosomal subunit protein uL14.